The sequence spans 30 residues: Cytochrome c oxidase subunit 5C (30 aa).

A helical membrane pass occupies residues 15–30; it reads VVKELVIXXXLGLXAG.

This sequence belongs to the cytochrome c oxidase subunit 5C family.

The protein localises to the mitochondrion inner membrane. Its function is as follows. This protein is one of the nuclear-coded polypeptide chains of cytochrome c oxidase, the terminal oxidase in mitochondrial electron transport. The polypeptide is Cytochrome c oxidase subunit 5C (COX5C) (Solanum tuberosum (Potato)).